The primary structure comprises 278 residues: Probable esterase TOX9 (278 aa).

Catalysis depends on charge relay system residues serine 119, aspartate 222, and histidine 250.

Belongs to the LovG family.

It functions in the pathway mycotoxin biosynthesis. Its function is as follows. Probable esterase; part of the Tox1A locus, one of the 2 loci that mediate the biosynthesis of T-toxin, a family of linear polyketides 37 to 45 carbons in length, of which the major component is 41 carbons, and which leads to high virulence to maize. One of the PKSs (PKS1 or PKS2) could synthesize a precursor, used subsequently by the other PKS as starter unit, to add additional carbons. Variability in the length of the final carbon backbone C35-47 could be achieved by varying the number of condensation cycles, or use of different starter or extender units or might be due to decarboxylation of the penultimate product, catalyzed by DEC1. Additional proteins are required for the biosynthesis of T-toxin, including oxidoreductases RED1, RED2, RED3, LAM1 and OXI1, as well as esterase TOX9. The chain is Probable esterase TOX9 from Cochliobolus heterostrophus (strain C4 / ATCC 48331 / race T) (Southern corn leaf blight fungus).